We begin with the raw amino-acid sequence, 285 residues long: Nucleotide-binding protein PFL_0912 (285 aa).

8-15 (GRSGSGKS) lines the ATP pocket. 60–63 (DARN) is a GTP binding site.

Belongs to the RapZ-like family.

Its function is as follows. Displays ATPase and GTPase activities. The protein is Nucleotide-binding protein PFL_0912 of Pseudomonas fluorescens (strain ATCC BAA-477 / NRRL B-23932 / Pf-5).